Reading from the N-terminus, the 924-residue chain is Alpha-actinin, sarcomeric (924 aa).

An actin-binding region spans residues 1–250 (MMMENGLSME…IMTYVSCYYH (250 aa)). Calponin-homology (CH) domains are found at residues 34–138 (KQQK…LRFA) and 147–253 (MTAK…HAFQ). Spectrin repeat units follow at residues 251–395 (AFQG…TVSD), 396–510 (ISNS…RCQR), 511–631 (ICDQ…TAND), and 632–744 (MTRK…TMET). EF-hand domains are found at residues 778–813 (EQLN…LGYS) and 819–854 (QGDL…ESTD). Ca(2+)-binding residues include aspartate 791, asparagine 793, threonine 795, arginine 797, and glutamate 802.

The protein belongs to the alpha-actinin family. As to quaternary structure, homodimer; antiparallel. Interacts with Smn; the interaction occurs in adult thoracic tissues. As to expression, larval muscle isoform is expressed in the larval body wall, adult muscles of the head and abdomen and supercontractile muscles of the larva and adult. Adult muscle isoform accumulates within adult fibrillar and tubular muscles.

The protein resides in the cytoplasm. It localises to the myofibril. The protein localises to the sarcomere. It is found in the z line. F-actin cross-linking protein which is thought to anchor actin to a variety of intracellular structures. This is a bundling protein. In Drosophila melanogaster (Fruit fly), this protein is Alpha-actinin, sarcomeric (Actn).